Reading from the N-terminus, the 201-residue chain is MKKILTTPIKAEDLQDIRVDDVIYLTGTLVTCRDVCHRRLIELKRPIPYDLNGKAIFHAGPIVRKNGDKWEMVSVGPTTSMRMESFEREFIEQTGVKLVVGKGGMGPLTEEGCQKFKALHVIFPAGCAVLAATQVEEIEEVHWTELGMPESLWVCRVKEFGPLIVSIDTHGNNLIAENKKLFAERRDPIVEEICEHVHYIK.

His-37 is an active-site residue.

It belongs to the class-I fumarase family. Heterotetramer of two alpha and two beta subunits.

It carries out the reaction (2R,3R)-tartrate = oxaloacetate + H2O. The sequence is that of L(+)-tartrate dehydratase subunit beta (ttdB) from Shigella sonnei (strain Ss046).